The sequence spans 899 residues: Tubulin glycylase 3F (899 aa).

The TTL domain occupies 471-835 (FKDVIQIIKN…TEYYQIQNWK (365 aa)). Residues 642 to 645 (QKYI), Lys-663, and Asp-665 each bind ATP.

Its subcellular location is the cytoplasm. It is found in the cytoskeleton. It localises to the cilium basal body. Its function is as follows. Probable glycylase which modifies tubulin, generating side chains of glycine on the gamma-carboxyl groups of specific glutamate residues within the C-terminal tail of tubulin. The chain is Tubulin glycylase 3F (TTLL3F) from Tetrahymena thermophila (strain SB210).